The chain runs to 465 residues: MSSELMFNYTFSWPAGPKDVILTGTFDDWRGTLPLVKTAKGNFEITMPVKLANKDDTFQFKFIVDGVWCVSDSYKKEHVSEGIENNFLQITDLVETQEVAGASRIPEAGGLLCGKPPRSAGPPSTSNRKKNKRNNKKRRSKLKKKSTKNNKKSNESLDDNEEEDGVTGTTTEDVTGTSREETPLAEPTNVSKEAPGNFHILPIDQSADTTQSNGIIGGPGPVLVPNPGEIKEFTEIRDVDARELNERLNKKEEVPEPVAGPIVESSVTEKSPALPQADDPIVETKEVAHNVQELTPQVEAVTPLINEPEPLPTPEAQISIPESSKVEPVEGSLQSKLVEKRESTEGVLDGSKKVENKAKKDEEVFTLDPIVNKAPKLPLTDEQTAEGRKSPAVSEEKEKKKKQEKGSKEVKRSETSKEKKPSAKEVKKQTVKAPKKQTASPLSSSTEEPKKKKTGFFGKLKKLFK.

Disordered stretches follow at residues Glu107–Pro227 and Arg247–Gln276. Positions Asn127–Lys151 are enriched in basic residues. Residues Ser153 and Ser156 each carry the phosphoserine modification. Positions Ser156–Gly165 are enriched in acidic residues. The X-DNA-binding stretch occupies residues Asn160–Glu161. Over residues Val166–Thr177 the composition is skewed to low complexity. At Thr182 the chain carries Phosphothreonine. Ser271 bears the Phosphoserine mark. The residue at position 295 (Thr295) is a Phosphothreonine. The tract at residues Ala300–Lys465 is disordered. Phosphoserine occurs at positions 319 and 343. Residues Leu337–Glu363 show a composition bias toward basic and acidic residues. A Phosphothreonine modification is found at Thr366. Composition is skewed to basic and acidic residues over residues Ala385–Glu398 and Glu404–Lys428. Ser394 is subject to Phosphoserine. Ser440 carries the phosphoserine modification. Over residues Lys451–Lys465 the composition is skewed to basic residues.

This sequence belongs to the CRP1/MDG1 family. Post-translationally, cleaved in the vicinity of position 160 to give an X-DNA-binding N-terminal subpeptide and a non-DNA-binding C-terminal subpeptide.

In terms of biological role, cruciform DNA-binding protein which exerts an enhancing effect on the cleavage of cruciform DNA (X-DNA) by endonuclease VII from bacteriophage T4. In Saccharomyces cerevisiae (strain ATCC 204508 / S288c) (Baker's yeast), this protein is Cruciform DNA-recognizing protein 1 (CRP1).